The primary structure comprises 223 residues: Ribose-5-phosphate isomerase A (223 aa).

Residues 28–31 (TGTT), 81–84 (DSAD), and 94–97 (KGGG) each bind substrate. Glutamate 103 serves as the catalytic Proton acceptor. Lysine 121 contacts substrate.

This sequence belongs to the ribose 5-phosphate isomerase family. Homodimer.

It carries out the reaction aldehydo-D-ribose 5-phosphate = D-ribulose 5-phosphate. The protein operates within carbohydrate degradation; pentose phosphate pathway; D-ribose 5-phosphate from D-ribulose 5-phosphate (non-oxidative stage): step 1/1. Functionally, catalyzes the reversible conversion of ribose-5-phosphate to ribulose 5-phosphate. The chain is Ribose-5-phosphate isomerase A from Buchnera aphidicola subsp. Acyrthosiphon pisum (strain 5A).